Consider the following 438-residue polypeptide: Transposon Ty2-LR1 Gag polyprotein (438 aa).

3 stretches are compositionally biased toward polar residues: residues Met1–His11, Ala19–Asn39, and Lys49–Thr60. 3 disordered regions span residues Met1–Gln86, Lys364–His397, and Ser419–Ile438. Positions Glu295–His397 are RNA-binding. Residues Thr369–Arg381 show a composition bias toward low complexity.

Homotrimer.

The protein localises to the cytoplasm. Its function is as follows. Capsid protein (CA) is the structural component of the virus-like particle (VLP), forming the shell that encapsulates the retrotransposons dimeric RNA genome. The particles are assembled from trimer-clustered units and there are holes in the capsid shells that allow for the diffusion of macromolecules. CA also has nucleocapsid-like chaperone activity, promoting primer tRNA(i)-Met annealing to the multipartite primer-binding site (PBS), dimerization of Ty2 RNA and initiation of reverse transcription. The chain is Transposon Ty2-LR1 Gag polyprotein (TY2A-LR1) from Saccharomyces cerevisiae (strain ATCC 204508 / S288c) (Baker's yeast).